A 29-amino-acid polypeptide reads, in one-letter code: Potassium-transporting ATPase KdpF subunit (29 aa).

A helical transmembrane segment spans residues 2–22 (LIGEAVLAVVTVAVVAYLTYV).

This sequence belongs to the KdpF family. In terms of assembly, the system is composed of three essential subunits: KdpA, KdpB and KdpC. The complex also contains KdpF, a small non-essential subunit.

It localises to the cell membrane. Part of the high-affinity ATP-driven potassium transport (or Kdp) system, which catalyzes the hydrolysis of ATP coupled with the electrogenic transport of potassium into the cytoplasm. This subunit may be involved in stabilization of the complex. The Kdp system is essential for growth under K(+) limitation, and for survival under desiccation and salt crystal inclusion. In Halobacterium salinarum (strain ATCC 29341 / DSM 671 / R1), this protein is Potassium-transporting ATPase KdpF subunit.